Reading from the N-terminus, the 93-residue chain is Large ribosomal subunit protein eL42 (93 aa).

Zn(2+) contacts are provided by cysteine 11, cysteine 14, cysteine 71, and cysteine 74. Residues 11 to 74 (CPYCKKHTSH…IALRLVCDEC (64 aa)) form a C4-type zinc finger.

This sequence belongs to the eukaryotic ribosomal protein eL42 family. As to quaternary structure, part of the 50S ribosomal subunit. Requires Zn(2+) as cofactor.

Its function is as follows. Binds to the 23S rRNA. The polypeptide is Large ribosomal subunit protein eL42 (Thermoplasma acidophilum (strain ATCC 25905 / DSM 1728 / JCM 9062 / NBRC 15155 / AMRC-C165)).